We begin with the raw amino-acid sequence, 874 residues long: Dynein regulatory complex subunit 7 (874 aa).

The interval 1 to 20 (MEVLREKVEEEEEAEREEAA) is disordered. 2 coiled-coil regions span residues 1 to 67 (MEVL…SAEL) and 257 to 297 (RFEQ…DALH). Acidic residues predominate over residues 386 to 400 (TEEDDSGINDEDDVE). Residues 386–410 (TEEDDSGINDEDDVENLGKEDEDKS) are disordered. Residues 401–410 (NLGKEDEDKS) are compositionally biased toward basic and acidic residues.

Belongs to the DRC7 family. In terms of assembly, component of the nexin-dynein regulatory complex (N-DRC). Interacts with TCTE1/DRC5. Interacts with DRC3 and GAS8/DRC4. In terms of tissue distribution, expressed in the testis.

It is found in the cell projection. It localises to the cilium. Its subcellular location is the flagellum. The protein localises to the cytoplasm. The protein resides in the cytoskeleton. It is found in the cilium axoneme. It localises to the flagellum axoneme. Component of the nexin-dynein regulatory complex (N-DRC) a key regulator of ciliary/flagellar motility which maintains the alignment and integrity of the distal axoneme and regulates microtubule sliding in motile axonemes. Involved in the regulation of flagellar motility. Essential for male fertility, sperm head morphogenesis and sperm flagellum formation. The protein is Dynein regulatory complex subunit 7 (DRC7) of Pan troglodytes (Chimpanzee).